Consider the following 341-residue polypeptide: Probable galacturonosyltransferase-like 2 (341 aa).

The Cytoplasmic portion of the chain corresponds to 1–4 (MHSK). Residues 5 to 22 (FILYLSILAVFTVSFAGG) form a helical; Signal-anchor for type II membrane protein membrane-spanning segment. At 23-341 (ERFKEAPKFF…LESRFDLIES (319 aa)) the chain is on the lumenal side. The N-linked (GlcNAc...) asparagine glycan is linked to Asn190.

Belongs to the glycosyltransferase 8 family.

It localises to the golgi apparatus membrane. It functions in the pathway glycan metabolism; pectin biosynthesis. In terms of biological role, may be involved in pectin and/or xylans biosynthesis in cell walls. The polypeptide is Probable galacturonosyltransferase-like 2 (GATL2) (Arabidopsis thaliana (Mouse-ear cress)).